We begin with the raw amino-acid sequence, 188 residues long: dCTP deaminase (188 aa).

DCTP-binding positions include 111-116 (KSTYAR), 135-137 (TLE), Gln156, Tyr170, and Gln180. Glu137 functions as the Proton donor/acceptor in the catalytic mechanism.

Belongs to the dCTP deaminase family. In terms of assembly, homotrimer.

The catalysed reaction is dCTP + H2O + H(+) = dUTP + NH4(+). It participates in pyrimidine metabolism; dUMP biosynthesis; dUMP from dCTP (dUTP route): step 1/2. Catalyzes the deamination of dCTP to dUTP. This is dCTP deaminase from Aromatoleum aromaticum (strain DSM 19018 / LMG 30748 / EbN1) (Azoarcus sp. (strain EbN1)).